A 604-amino-acid polypeptide reads, in one-letter code: Elongation factor 4 (604 aa).

One can recognise a tr-type G domain in the interval 2–184; it reads DHIRNFSIIA…AVITRMPAPR (183 aa). GTP is bound by residues 14 to 19 and 131 to 134; these read DHGKST and NKMD.

The protein belongs to the TRAFAC class translation factor GTPase superfamily. Classic translation factor GTPase family. LepA subfamily.

It is found in the cell inner membrane. It carries out the reaction GTP + H2O = GDP + phosphate + H(+). In terms of biological role, required for accurate and efficient protein synthesis under certain stress conditions. May act as a fidelity factor of the translation reaction, by catalyzing a one-codon backward translocation of tRNAs on improperly translocated ribosomes. Back-translocation proceeds from a post-translocation (POST) complex to a pre-translocation (PRE) complex, thus giving elongation factor G a second chance to translocate the tRNAs correctly. Binds to ribosomes in a GTP-dependent manner. The sequence is that of Elongation factor 4 from Methylibium petroleiphilum (strain ATCC BAA-1232 / LMG 22953 / PM1).